We begin with the raw amino-acid sequence, 444 residues long: Ribosomal protein uS12 methylthiotransferase RimO (444 aa).

An MTTase N-terminal domain is found at 6–116 (PNIGFVSLGC…VMEHVHKYVP (111 aa)). [4Fe-4S] cluster is bound by residues C15, C51, C80, C148, C152, and C155. Positions 134 to 375 (LTPKHYAYLK…MQLQQEISAA (242 aa)) constitute a Radical SAM core domain. Positions 378-444 (QQKIGKTWKV…ADEYDLWGTC (67 aa)) constitute a TRAM domain.

It belongs to the methylthiotransferase family. RimO subfamily. [4Fe-4S] cluster is required as a cofactor.

It localises to the cytoplasm. It catalyses the reaction L-aspartate(89)-[ribosomal protein uS12]-hydrogen + (sulfur carrier)-SH + AH2 + 2 S-adenosyl-L-methionine = 3-methylsulfanyl-L-aspartate(89)-[ribosomal protein uS12]-hydrogen + (sulfur carrier)-H + 5'-deoxyadenosine + L-methionine + A + S-adenosyl-L-homocysteine + 2 H(+). Functionally, catalyzes the methylthiolation of an aspartic acid residue of ribosomal protein uS12. This is Ribosomal protein uS12 methylthiotransferase RimO from Actinobacillus succinogenes (strain ATCC 55618 / DSM 22257 / CCUG 43843 / 130Z).